Consider the following 674-residue polypeptide: Acetyl-coenzyme A synthetase (674 aa).

CoA contacts are provided by residues 201-204 and Thr320; that span reads RGGR. ATP contacts are provided by residues 396–398, 420–425, Asp518, and Arg533; these read GEP and DTYWQT. Residue Ser541 coordinates CoA. ATP is bound at residue Arg544. A CoA-binding site is contributed by Arg603.

The protein belongs to the ATP-dependent AMP-binding enzyme family.

The catalysed reaction is acetate + ATP + CoA = acetyl-CoA + AMP + diphosphate. The polypeptide is Acetyl-coenzyme A synthetase (acsA) (Dictyostelium discoideum (Social amoeba)).